The chain runs to 45 residues: Large ribosomal subunit protein bL34 (45 aa).

The disordered stretch occupies residues 1-45 (MTKRTLGGTVRKQKRTSGFRARMRSHTGQNVIRARRKKGRHRLTV). Composition is skewed to basic residues over residues 11-25 (RKQK…RMRS) and 33-45 (RARR…RLTV).

It belongs to the bacterial ribosomal protein bL34 family.

This is Large ribosomal subunit protein bL34 from Picosynechococcus sp. (strain ATCC 27264 / PCC 7002 / PR-6) (Agmenellum quadruplicatum).